The primary structure comprises 862 residues: S-layer protein EA1 (862 aa).

The N-terminal stretch at 1 to 29 is a signal peptide; the sequence is MAKTNSYKKVIAGTMTAAMVAGIVSPVAA. SLH domains lie at 30 to 93, 94 to 151, and 152 to 214; these read AGKS…NAQP, SFKD…KVNG, and ELVT…DNAQ.

It localises to the secreted. The protein localises to the cell wall. It is found in the S-layer. Functionally, the S-layer is a paracrystalline mono-layered assembly of proteins which coat the surface of bacteria. The polypeptide is S-layer protein EA1 (eag) (Bacillus anthracis).